We begin with the raw amino-acid sequence, 64 residues long: Large ribosomal subunit protein bL35 (64 aa).

The protein belongs to the bacterial ribosomal protein bL35 family.

In Acidothermus cellulolyticus (strain ATCC 43068 / DSM 8971 / 11B), this protein is Large ribosomal subunit protein bL35.